Reading from the N-terminus, the 104-residue chain is Conantokin-P (104 aa).

The N-terminal stretch at 1–26 (MQLYTYLYLLVPLVTFHLILSTGTLA) is a signal peptide. The propeptide occupies 27-80 (HGGTLTERRSTDTTALKPEPVLLQKSDARSTDDNDKDRLTQMKRILKKRGNKAR). Residues 29 to 87 (GTLTERRSTDTTALKPEPVLLQKSDARSTDDNDKDRLTQMKRILKKRGNKARGEEEHSK) form a disordered region. Basic and acidic residues predominate over residues 52-66 (SDARSTDDNDKDRLT). A 4-carboxyglutamate mark is found at glutamate 83, glutamate 84, glutamate 90, glutamate 94, and glutamate 103. 2 residues coordinate a divalent metal cation: glutamate 90 and glutamate 94. A disulfide bridge connects residues cysteine 91 and cysteine 104.

The protein belongs to the conotoxin B superfamily. As to expression, expressed by the venom duct.

It localises to the secreted. Its function is as follows. Conantokins inhibit N-methyl-D-aspartate (NMDA) receptors. This toxin has the highest potency for the NR2B/GRIN2B subunit, followed by NR2A/GRIN2A, NR2C/GRIN2C, and NR2D/GRIN2D subunits. This is Conantokin-P from Conus purpurascens (Purple cone).